A 122-amino-acid polypeptide reads, in one-letter code: Secreted RxLR effector protein RXLR-C251 (122 aa).

The first 24 residues, 1–24 (MRFFYKLALMTTVASLACSDTALA), serve as a signal peptide directing secretion. The RxLR motif lies at 48–51 (RSLR).

It belongs to the RxLR effector family.

It is found in the secreted. The protein localises to the host cytoplasm. Its subcellular location is the host nucleus. Functionally, secreted effector that does not suppress pattern-triggered immunity (PTI) in plant host. The protein is Secreted RxLR effector protein RXLR-C251 of Plasmopara halstedii (Downy mildew of sunflower).